The sequence spans 416 residues: Glutamyl-tRNA reductase (416 aa).

Substrate is bound by residues 49–52, Ser-105, 110–112, and Gln-116; these read TCNR and EPQ. Residue Cys-50 is the Nucleophile of the active site. 185 to 190 provides a ligand contact to NADP(+); it reads GAGETI.

Belongs to the glutamyl-tRNA reductase family. Homodimer.

The enzyme catalyses (S)-4-amino-5-oxopentanoate + tRNA(Glu) + NADP(+) = L-glutamyl-tRNA(Glu) + NADPH + H(+). It functions in the pathway porphyrin-containing compound metabolism; protoporphyrin-IX biosynthesis; 5-aminolevulinate from L-glutamyl-tRNA(Glu): step 1/2. Its function is as follows. Catalyzes the NADPH-dependent reduction of glutamyl-tRNA(Glu) to glutamate 1-semialdehyde (GSA). This Shewanella baltica (strain OS223) protein is Glutamyl-tRNA reductase.